The following is a 617-amino-acid chain: Sphingosine kinase 2 (617 aa).

The segment at M1 to E140 is required for binding to sulfatide and phosphoinositides and for membrane localization. The short motif at R87–R95 is the Nuclear localization signal element. One can recognise a DAGKc domain in the interval P143–S290. Residues N153–F155 and T185–N189 each bind ATP. Position 210–213 (S210–G213) interacts with substrate. D212 acts as the Proton donor/acceptor in catalysis. Residues E217 and G242 to G244 each bind ATP. D309 serves as a coordination point for substrate. ATP is bound by residues R316 and R322. A phosphoserine mark is found at S358 and S364. The segment at A371–P472 is disordered. Residue T377 is modified to Phosphothreonine. A Nuclear export signal motif is present at residues L381–L390. S384 and S386 each carry phosphoserine. Positions N412–G426 are enriched in gly residues. Phosphothreonine is present on T578. Position 586 to 588 (D586 to E588) interacts with ATP.

As to quaternary structure, interacts with histone H3. Interacts with HDAC1, HDAC2, MBD2 and SIN3A. Interacts with EEF1A1; the interaction enhances SPHK2 kinase activity. Interacts with PHB2. Requires Mg(2+) as cofactor. In terms of processing, phosphorylated by PKD on Ser-384 and Ser-386 upon PMA treatment. Phosphorylation induces export from the nucleus to the cytoplasm. Phosphorylated by MAPK1 and MAPK2 at Thr-578, phosphorylation is induced by agonists such as EGF and PMA and increases kinase activity. Cleaved by CASP1 in apoptotic cells. The truncated form is released from cells. As to expression, expressed in heart, brain, liver, kidney and testis. Expressed by mast cells (at protein level). In the substantia nigra, expressed by dopaminergic neurons (at protein level).

Its subcellular location is the lysosome membrane. The protein resides in the cytoplasm. The protein localises to the cell membrane. It localises to the endoplasmic reticulum. It is found in the nucleus. Its subcellular location is the mitochondrion inner membrane. The catalysed reaction is a sphingoid base + ATP = a sphingoid 1-phosphate + ADP + H(+). It catalyses the reaction sphing-4-enine + ATP = sphing-4-enine 1-phosphate + ADP + H(+). The enzyme catalyses sphinganine + ATP = sphinganine 1-phosphate + ADP + H(+). It carries out the reaction (4R)-hydroxysphinganine + ATP = (4R)-hydroxysphinganine 1-phosphate + ADP + H(+). In terms of biological role, catalyzes the phosphorylation of sphingosine to form sphingosine-1-phosphate (SPP), a lipid mediator with both intra- and extracellular functions. Also acts on D-erythro-dihydrosphingosine, D-erythro-sphingosine and L-threo-dihydrosphingosine. Binds phosphoinositides. In contrast to prosurvival SPHK1, has a positive effect on intracellular ceramide levels, inhibits cells growth and enhances apoptosis. In mitochondria, is important for cytochrome-c oxidase assembly and mitochondrial respiration. The SPP produced in mitochondria binds PHB2 and modulates the regulation via PHB2 of complex IV assembly and respiration. In nucleus, plays a role in epigenetic regulation of gene expression. Interacts with HDAC1 and HDAC2 and, through SPP production, inhibits their enzymatic activity, preventing the removal of acetyl groups from lysine residues with histones. Up-regulates acetylation of histone H3-K9, histone H4-K5 and histone H2B-K12. In nucleus, may have an inhibitory effect on DNA synthesis and cell cycle. In mast cells, is the main regulator of SPP production which mediates calcium influx, NF-kappa-B activation, cytokine production, such as TNF and IL6, and degranulation of mast cells. In dopaminergic neurons, is involved in promoting mitochondrial functions regulating ATP and ROS levels. Also involved in the regulation of glucose and lipid metabolism. The sequence is that of Sphingosine kinase 2 from Mus musculus (Mouse).